We begin with the raw amino-acid sequence, 250 residues long: Probable transcriptional regulatory protein RC1_1808 (250 aa).

Residues 1 to 21 are disordered; that stretch reads MAGHSQFKNIMHRKGAQDAKR.

This sequence belongs to the TACO1 family.

The protein resides in the cytoplasm. This is Probable transcriptional regulatory protein RC1_1808 from Rhodospirillum centenum (strain ATCC 51521 / SW).